The chain runs to 258 residues: Imidazole glycerol phosphate synthase subunit HisF (258 aa).

Active-site residues include Asp11 and Asp130.

It belongs to the HisA/HisF family. As to quaternary structure, heterodimer of HisH and HisF.

The protein localises to the cytoplasm. The enzyme catalyses 5-[(5-phospho-1-deoxy-D-ribulos-1-ylimino)methylamino]-1-(5-phospho-beta-D-ribosyl)imidazole-4-carboxamide + L-glutamine = D-erythro-1-(imidazol-4-yl)glycerol 3-phosphate + 5-amino-1-(5-phospho-beta-D-ribosyl)imidazole-4-carboxamide + L-glutamate + H(+). It participates in amino-acid biosynthesis; L-histidine biosynthesis; L-histidine from 5-phospho-alpha-D-ribose 1-diphosphate: step 5/9. IGPS catalyzes the conversion of PRFAR and glutamine to IGP, AICAR and glutamate. The HisF subunit catalyzes the cyclization activity that produces IGP and AICAR from PRFAR using the ammonia provided by the HisH subunit. In Methylorubrum populi (strain ATCC BAA-705 / NCIMB 13946 / BJ001) (Methylobacterium populi), this protein is Imidazole glycerol phosphate synthase subunit HisF.